A 439-amino-acid chain; its full sequence is Ribosomal protein uS12 methylthiotransferase RimO (439 aa).

The MTTase N-terminal domain maps to 2–114; sequence SKLYLMSLGC…IDEMILKKTN (113 aa). Positions 11, 45, 77, 146, 150, and 153 each coordinate [4Fe-4S] cluster. In terms of domain architecture, Radical SAM core spans 132–363; it reads TGSNSHAFIK…VDEVIEKSFE (232 aa).

The protein belongs to the methylthiotransferase family. RimO subfamily. [4Fe-4S] cluster is required as a cofactor.

It localises to the cytoplasm. It catalyses the reaction L-aspartate(89)-[ribosomal protein uS12]-hydrogen + (sulfur carrier)-SH + AH2 + 2 S-adenosyl-L-methionine = 3-methylsulfanyl-L-aspartate(89)-[ribosomal protein uS12]-hydrogen + (sulfur carrier)-H + 5'-deoxyadenosine + L-methionine + A + S-adenosyl-L-homocysteine + 2 H(+). Catalyzes the methylthiolation of an aspartic acid residue of ribosomal protein uS12. The chain is Ribosomal protein uS12 methylthiotransferase RimO from Campylobacter jejuni subsp. jejuni serotype O:2 (strain ATCC 700819 / NCTC 11168).